Consider the following 71-residue polypeptide: Omega-conotoxin-like Ac6.4 (71 aa).

The N-terminal stretch at 1–22 (MKLTCVVIVAVLLLTACQLLTA) is a signal peptide. A propeptide spanning residues 23–45 (DDSRGTQKHRALRSDTKLSMSTR) is cleaved from the precursor. Intrachain disulfides connect C46–C61, C53–C65, and C60–C70. The residue at position 70 (C70) is a Cysteine amide.

Belongs to the conotoxin O1 superfamily. Expressed by the venom duct.

It localises to the secreted. Omega-conotoxins act at presynaptic membranes, they bind and block voltage-gated calcium channels (Cav). In Conus achatinus (Little frog cone), this protein is Omega-conotoxin-like Ac6.4.